Reading from the N-terminus, the 295-residue chain is uncharacterized protein (295 aa).

The signal sequence occupies residues 1 to 19 (MHKLLLIITVFSTFNVAQA).

This is an uncharacterized protein from Rickettsia typhi (strain ATCC VR-144 / Wilmington).